Here is a 70-residue protein sequence, read N- to C-terminus: Cuticle protein 16 isoform b (70 aa).

In Limulus polyphemus (Atlantic horseshoe crab), this protein is Cuticle protein 16 isoform b.